The chain runs to 205 residues: Holliday junction resolvase RecU (205 aa).

The tract at residues 1-22 (MAINYPAGTRRRTAQAKNTMRT) is disordered. Positions 90, 92, 105, and 124 each coordinate Mg(2+).

This sequence belongs to the RecU family. Mg(2+) is required as a cofactor.

It is found in the cytoplasm. It catalyses the reaction Endonucleolytic cleavage at a junction such as a reciprocal single-stranded crossover between two homologous DNA duplexes (Holliday junction).. Endonuclease that resolves Holliday junction intermediates in genetic recombination. Cleaves mobile four-strand junctions by introducing symmetrical nicks in paired strands. Promotes annealing of linear ssDNA with homologous dsDNA. Required for DNA repair, homologous recombination and chromosome segregation. The polypeptide is Holliday junction resolvase RecU (Leuconostoc citreum (strain KM20)).